An 856-amino-acid polypeptide reads, in one-letter code: DNA mismatch repair protein MutS (856 aa).

Residue 617-624 (GPNMGGKS) participates in ATP binding.

This sequence belongs to the DNA mismatch repair MutS family.

Functionally, this protein is involved in the repair of mismatches in DNA. It is possible that it carries out the mismatch recognition step. This protein has a weak ATPase activity. The polypeptide is DNA mismatch repair protein MutS (Psychromonas ingrahamii (strain DSM 17664 / CCUG 51855 / 37)).